The following is a 133-amino-acid chain: ATP synthase epsilon chain, chloroplastic (133 aa).

The protein belongs to the ATPase epsilon chain family. In terms of assembly, F-type ATPases have 2 components, CF(1) - the catalytic core - and CF(0) - the membrane proton channel. CF(1) has five subunits: alpha(3), beta(3), gamma(1), delta(1), epsilon(1). CF(0) has three main subunits: a, b and c.

Its subcellular location is the plastid. The protein resides in the chloroplast thylakoid membrane. Produces ATP from ADP in the presence of a proton gradient across the membrane. The protein is ATP synthase epsilon chain, chloroplastic of Nicotiana tomentosiformis (Tobacco).